We begin with the raw amino-acid sequence, 147 residues long: D-aminoacyl-tRNA deacylase (147 aa).

Residues 137-138 (GP) carry the Gly-cisPro motif, important for rejection of L-amino acids motif.

This sequence belongs to the DTD family. In terms of assembly, homodimer.

Its subcellular location is the cytoplasm. It catalyses the reaction glycyl-tRNA(Ala) + H2O = tRNA(Ala) + glycine + H(+). The enzyme catalyses a D-aminoacyl-tRNA + H2O = a tRNA + a D-alpha-amino acid + H(+). Its function is as follows. An aminoacyl-tRNA editing enzyme that deacylates mischarged D-aminoacyl-tRNAs. Also deacylates mischarged glycyl-tRNA(Ala), protecting cells against glycine mischarging by AlaRS. Acts via tRNA-based rather than protein-based catalysis; rejects L-amino acids rather than detecting D-amino acids in the active site. By recycling D-aminoacyl-tRNA to D-amino acids and free tRNA molecules, this enzyme counteracts the toxicity associated with the formation of D-aminoacyl-tRNA entities in vivo and helps enforce protein L-homochirality. The protein is D-aminoacyl-tRNA deacylase of Acinetobacter baumannii (strain ACICU).